The sequence spans 354 residues: Ornithine cyclodeaminase (354 aa).

Residues Arg53 and Lys77 each contribute to the L-ornithine site. NAD(+)-binding positions include Thr92, Arg120, 147-148 (AQ), Asp169, Thr209, 232-235 (VGGD), Lys239, and Ser300. Arg120 contributes to the L-ornithine binding site. Asp235 serves as a coordination point for L-ornithine. Residue Asp235 is the Proton donor/acceptor of the active site. Val301 is a binding site for L-ornithine.

The protein belongs to the ornithine cyclodeaminase/mu-crystallin family. It depends on NAD(+) as a cofactor.

It carries out the reaction L-ornithine = L-proline + NH4(+). The protein operates within amino-acid biosynthesis; L-proline biosynthesis; L-proline from L-ornithine: step 1/1. With respect to regulation, is subject to substrate inhibition. Is regulated by L-arginine, which stimulates enzymatic activity at 0.1-1 mM while inhibits activity at higher concentrations, and has pronounced effects on the optima for pH and temperature and on the Km for L-ornithine. Is not inhibited by L-proline. Functionally, catalyzes the conversion of L-ornithine into L-proline with release of ammonia. Is involved in the utilization of nopaline, a catabolic pathway that proceeds through L-arginine and L-ornithine to L-proline. Nopaline is a predominant opine in plant cells transformed with Ti plasmid pTiC58. This is Ornithine cyclodeaminase from Agrobacterium fabrum (strain C58 / ATCC 33970) (Agrobacterium tumefaciens (strain C58)).